A 607-amino-acid polypeptide reads, in one-letter code: Elongation factor 4 (607 aa).

One can recognise a tr-type G domain in the interval 11–193; that stretch reads EKIRNFSIIA…QIVEKVPAPT (183 aa). Residues 23-28 and 140-143 each bind GTP; these read DHGKST and NKID.

The protein belongs to the TRAFAC class translation factor GTPase superfamily. Classic translation factor GTPase family. LepA subfamily.

The protein localises to the cell membrane. The enzyme catalyses GTP + H2O = GDP + phosphate + H(+). Functionally, required for accurate and efficient protein synthesis under certain stress conditions. May act as a fidelity factor of the translation reaction, by catalyzing a one-codon backward translocation of tRNAs on improperly translocated ribosomes. Back-translocation proceeds from a post-translocation (POST) complex to a pre-translocation (PRE) complex, thus giving elongation factor G a second chance to translocate the tRNAs correctly. Binds to ribosomes in a GTP-dependent manner. The sequence is that of Elongation factor 4 from Streptococcus pneumoniae serotype 19F (strain G54).